We begin with the raw amino-acid sequence, 723 residues long: MQNSEGGADSPASVALRPSAAAPPVPASPQRVLVQAASSNPKGAQMQPISLPRVQQVPQQVQPVQHVYPAQVQYVEGGDAVYTNGAIRTAYTYNPEPQMYAPSSTASYFEAPGGAQVTVAASSPPAVPSHSMVGITMDVGGSPIVSSAGAYLIHGGMDSTRHSLAHTSRSSPATLEMAIENLQKSEGITSHKSGLLNSHLQWLLDNYETAEGVSLPRSSLYNHYLRHCQEHKLDPVNAASFGKLIRSVFMGLRTRRLGTRGNSKYHYYGIRLKPDSPLNRLQEDTQYMAMRQQPMHQKPRYRPAQKTDSLGDSGSHSGLHSTPEQTMAVQSQHHQQYIDVSHVFPEFPAPDLGSFLLQDGVTLHDVKALQLVYRRHCEATVDVVMNLQFHYIEKLWLSFWNSKASSSDGPTSLPASDEDPEGAVLPKDKLISLCQCDPILRWMRSCDHILYQALVEILIPDVLRPVPSTLTQAIRNFAKSLEGWLTNAMSDFPQQVIQTKVGVVSAFAQTLRRYTSLNHLAQAARAVLQNTSQINQMLSDLNRVDFANVQEQASWVCQCEESVVQRLEQDFKLTLQQQSSLDQWASWLDSVVTQVLKQHAGSPSFPKAARQFLLKWSFYSSMVIRDLTLRSAASFGSFHLIRLLYDEYMFYLVEHRVAEATGETPIAVMGEFNDLASLSLTLLDKDDMGDEQRGSEAGPDARSLGEPLVKRERSDPNHSLQGI.

Residues 1 to 46 (MQNSEGGADSPASVALRPSAAAPPVPASPQRVLVQAASSNPKGAQM) are disordered. The span at 10 to 20 (SPASVALRPSA) shows a compositional bias: low complexity. A Phosphoserine modification is found at serine 28. The segment at residues 199–274 (HLQWLLDNYE…YHYYGIRLKP (76 aa)) is a DNA-binding region (RFX-type winged-helix). A disordered region spans residues 292 to 332 (QQPMHQKPRYRPAQKTDSLGDSGSHSGLHSTPEQTMAVQSQ). The span at 308 to 321 (DSLGDSGSHSGLHS) shows a compositional bias: low complexity. Residues 322-332 (TPEQTMAVQSQ) show a composition bias toward polar residues. A Phosphoserine modification is found at serine 416. The tract at residues 688-723 (MGDEQRGSEAGPDARSLGEPLVKRERSDPNHSLQGI) is disordered.

It belongs to the RFX family. As to quaternary structure, homodimer; probably only forms homodimers in testis. Heterodimer; heterodimerizes with RFX1 and RFX3.

Its subcellular location is the nucleus. The protein resides in the cytoplasm. Its function is as follows. Transcription factor that acts as a key regulator of spermatogenesis. Acts by regulating expression of genes required for the haploid phase during spermiogenesis, such as genes required for cilium assembly and function. Recognizes and binds the X-box, a regulatory motif with DNA sequence 5'-GTNRCC(0-3N)RGYAAC-3' present on promoters. Probably activates transcription of the testis-specific histone gene H1-6. This is DNA-binding protein RFX2 (RFX2) from Homo sapiens (Human).